The chain runs to 482 residues: L-propargylglycine--L-glutamate ligase (482 aa).

It catalyses the reaction L-propargylglycine + L-glutamate + ATP = L-gamma-glutamyl-L-propargylglycine + ADP + phosphate + H(+). The protein operates within amino-acid metabolism. It participates in antibiotic biosynthesis. In terms of biological role, involved in the biosynthesis of terminal alkyne-containing amino acids such as L-beta-ethynylserine, that are produced as antibiotics by S.cattleya. Catalyzes the ATP-dependent ligation of L-propargylglycine to L-glutamate to form the dipeptide L-gamma-glutamyl-L-propargylglycine. Is selective for L-propargylglycine over norvaline, allylglycine and the standard proteinogenic amino acids, except L-cysteine which can be used as a substrate to a lesser extent. The chain is L-propargylglycine--L-glutamate ligase from Streptantibioticus cattleyicolor (strain ATCC 35852 / DSM 46488 / JCM 4925 / NBRC 14057 / NRRL 8057) (Streptomyces cattleya).